We begin with the raw amino-acid sequence, 478 residues long: Glutamate--tRNA ligase (478 aa).

A 'HIGH' region motif is present at residues 15-25 (PSPTGFLHIGG). Positions 244 to 248 (KLSKR) match the 'KMSKS' region motif. Lysine 247 contacts ATP.

The protein belongs to the class-I aminoacyl-tRNA synthetase family. Glutamate--tRNA ligase type 1 subfamily. As to quaternary structure, monomer.

It localises to the cytoplasm. It carries out the reaction tRNA(Glu) + L-glutamate + ATP = L-glutamyl-tRNA(Glu) + AMP + diphosphate. Its function is as follows. Catalyzes the attachment of glutamate to tRNA(Glu) in a two-step reaction: glutamate is first activated by ATP to form Glu-AMP and then transferred to the acceptor end of tRNA(Glu). This Bradyrhizobium sp. (strain ORS 278) protein is Glutamate--tRNA ligase.